Consider the following 357-residue polypeptide: Set1 complex component swd2 (357 aa).

WD repeat units follow at residues 24 to 65 (NFVG…KSLA), 110 to 149 (GHKQ…CQGL), 199 to 241 (PPHV…RVPS), and 247 to 289 (TQDG…QTVN).

Belongs to the WD repeat SWD2 family. In terms of assembly, component of the Set1 complex composed of ash2, sdc1, set1, shg1, spp1, swd1, swd2 and swd3.

The protein localises to the nucleus. Functionally, the Set1 complex specifically methylates 'Lys-4' of histone H3. This Schizosaccharomyces pombe (strain 972 / ATCC 24843) (Fission yeast) protein is Set1 complex component swd2.